Consider the following 168-residue polypeptide: Ribosome maturation factor RimM (168 aa).

A PRC barrel domain is found at Val96–Trp168.

It belongs to the RimM family. As to quaternary structure, binds ribosomal protein uS19.

It is found in the cytoplasm. Its function is as follows. An accessory protein needed during the final step in the assembly of 30S ribosomal subunit, possibly for assembly of the head region. Essential for efficient processing of 16S rRNA. May be needed both before and after RbfA during the maturation of 16S rRNA. It has affinity for free ribosomal 30S subunits but not for 70S ribosomes. The sequence is that of Ribosome maturation factor RimM from Aromatoleum aromaticum (strain DSM 19018 / LMG 30748 / EbN1) (Azoarcus sp. (strain EbN1)).